Here is a 434-residue protein sequence, read N- to C-terminus: Innexin-14 (434 aa).

4 helical membrane-spanning segments follow: residues 30–50 (LFTV…QHFG), 106–126 (WVPF…WCWA), 301–321 (IFIG…IGTV), and 365–385 (YLCA…GFLK).

The protein belongs to the pannexin family.

The protein localises to the cell membrane. The protein resides in the cell junction. It is found in the gap junction. Structural component of the gap junctions. This Caenorhabditis elegans protein is Innexin-14 (inx-14).